The sequence spans 210 residues: Proteasome subunit beta 2 (210 aa).

Positions 1 to 12 are cleaved as a propeptide — removed in mature form; by autocatalysis; the sequence is MSNNVEEKILHG. Thr-13 acts as the Nucleophile in catalysis.

It belongs to the peptidase T1B family. The 20S proteasome core is composed of 14 alpha and 14 beta subunits that assemble into four stacked heptameric rings, resulting in a barrel-shaped structure. The two inner rings, each composed of seven catalytic beta subunits, are sandwiched by two outer rings, each composed of seven alpha subunits. The catalytic chamber with the active sites is on the inside of the barrel. Has a gated structure, the ends of the cylinder being occluded by the N-termini of the alpha-subunits. Is capped at one or both ends by the proteasome regulatory ATPase, PAN.

It localises to the cytoplasm. It carries out the reaction Cleavage of peptide bonds with very broad specificity.. The formation of the proteasomal ATPase PAN-20S proteasome complex, via the docking of the C-termini of PAN into the intersubunit pockets in the alpha-rings, triggers opening of the gate for substrate entry. Interconversion between the open-gate and close-gate conformations leads to a dynamic regulation of the 20S proteasome proteolysis activity. Its function is as follows. Component of the proteasome core, a large protease complex with broad specificity involved in protein degradation. This is Proteasome subunit beta 2 from Cenarchaeum symbiosum (strain A).